The primary structure comprises 351 residues: S-adenosylmethionine:tRNA ribosyltransferase-isomerase (351 aa).

It belongs to the QueA family. In terms of assembly, monomer.

It is found in the cytoplasm. It carries out the reaction 7-aminomethyl-7-carbaguanosine(34) in tRNA + S-adenosyl-L-methionine = epoxyqueuosine(34) in tRNA + adenine + L-methionine + 2 H(+). It participates in tRNA modification; tRNA-queuosine biosynthesis. In terms of biological role, transfers and isomerizes the ribose moiety from AdoMet to the 7-aminomethyl group of 7-deazaguanine (preQ1-tRNA) to give epoxyqueuosine (oQ-tRNA). The protein is S-adenosylmethionine:tRNA ribosyltransferase-isomerase of Phocaeicola vulgatus (strain ATCC 8482 / DSM 1447 / JCM 5826 / CCUG 4940 / NBRC 14291 / NCTC 11154) (Bacteroides vulgatus).